Consider the following 769-residue polypeptide: CO(2)-response secreted protease (769 aa).

An N-terminal signal peptide occupies residues 1–27 (MKGITFFTPFLSFLYLLCILFMTETEA). In terms of domain architecture, Inhibitor I9 spans 35 to 108 (VYIVYMGSAS…VFPDPHFQLH (74 aa)). Residues 112 to 613 (SWDFLKYQTS…AGELSSTASM (502 aa)) enclose the Peptidase S8 domain. Residues aspartate 145 and histidine 210 each act as charge relay system in the active site. Residues 381–465 (ADASEGSARA…SKEAAEIFSY (85 aa)) enclose the PA domain. The active-site Charge relay system is serine 546.

It belongs to the peptidase S8 family. In terms of tissue distribution, expressed in roots, guard cells and meristemoid and pavement cells.

The protein resides in the secreted. It is found in the cell wall. The catalysed reaction is Release of an N-terminal tripeptide from a polypeptide.. Mediates CO(2)-controlled stomatal development by cleaving peptide EPF2 (AC Q8LC53). Not active on peptides EPF1 (AC Q8S8I4) or stomagen (AC Q9SV72). The chain is CO(2)-response secreted protease from Arabidopsis thaliana (Mouse-ear cress).